An 843-amino-acid polypeptide reads, in one-letter code: OTU domain-containing protein 7B (843 aa).

Residues G50–D88 are disordered. Positions T65–R77 are enriched in basic and acidic residues. The residue at position 100 (S100) is a Phosphoserine. The interval E152 to W401 is TRAF-binding. The interval A167–A440 is catalytic. Positions L183–M365 constitute an OTU domain. The regulatory loop stretch occupies residues A187–N193. The active site involves D191. The active-site Nucleophile is the C194. The active-site Proton acceptor is H358. 2 disordered regions span residues A442–K587 and I652–P711. Basic and acidic residues-rich tracts occupy residues D456–S471 and S488–D500. S464, S467, and S471 each carry phosphoserine. The Nuclear localization signal signature appears at R483–R498. Over residues K531–S543 the composition is skewed to gly residues. Residues K665–Q675 show a composition bias toward basic and acidic residues. A Phosphothreonine modification is found at T729. Residues R732–L792 are disordered. The segment at P796–E831 adopts an A20-type zinc-finger fold. Residues C802, C807, C819, and C822 each coordinate Zn(2+).

Belongs to the peptidase C64 family. Interacts with ZAP70 in activated T cells, but not in resting T cells. Interacts with TRAF3. Interacts with TRAF6. Interacts with PARK7, leading to inhibit deubiquitinase activity. Interacts with EGFR, ITCH and NEDD4. Phosphorylated by EGFR. In terms of tissue distribution, widely expressed. Abundant in kidney, heart and fetal liver. Expressed differentially among B-cells at distinct developmental stages. Higher expression seen in primary immature B-cells as compared to the mature cells.

It localises to the cytoplasm. The protein resides in the nucleus. The catalysed reaction is Thiol-dependent hydrolysis of ester, thioester, amide, peptide and isopeptide bonds formed by the C-terminal Gly of ubiquitin (a 76-residue protein attached to proteins as an intracellular targeting signal).. Deubiquitinase activity is inhibited following interaction with PARK7. In terms of biological role, negative regulator of the non-canonical NF-kappa-B pathway that acts by mediating deubiquitination of TRAF3, an inhibitor of the NF-kappa-B pathway, thereby acting as a negative regulator of B-cell responses. In response to non-canonical NF-kappa-B stimuli, deubiquitinates 'Lys-48'-linked polyubiquitin chains of TRAF3, preventing TRAF3 proteolysis and over-activation of non-canonical NF-kappa-B. Negatively regulates mucosal immunity against infections. Deubiquitinates ZAP70, and thereby regulates T cell receptor (TCR) signaling that leads to the activation of NF-kappa-B. Plays a role in T cell homeostasis and is required for normal T cell responses, including production of IFNG and IL2. Mediates deubiquitination of EGFR. Has deubiquitinating activity toward 'Lys-11', 'Lys-48' and 'Lys-63'-linked polyubiquitin chains. Has a much higher catalytic rate with 'Lys-11'-linked polyubiquitin chains (in vitro); however the physiological significance of these data are unsure. Hydrolyzes both linear and branched forms of polyubiquitin. Acts as a regulator of mTORC1 and mTORC2 assembly by mediating 'Lys-63'-linked deubiquitination of MLST8, thereby promoting assembly of the mTORC2 complex, while inibiting formation of the mTORC1 complex. The protein is OTU domain-containing protein 7B (OTUD7B) of Homo sapiens (Human).